We begin with the raw amino-acid sequence, 604 residues long: Baculoviral IAP repeat-containing protein 3 (604 aa).

BIR repeat units follow at residues Glu29–Val96, Glu169–Ile235, and His255–Leu322. Cys292, Cys295, His312, and Cys319 together coordinate Zn(2+). The CARD domain occupies Lys439–Gln529. The RING-type zinc finger occupies Cys557 to Arg592.

This sequence belongs to the IAP family. In terms of assembly, interacts with PRSS25; interaction inhibits apoptotic suppressor activity. The BIR motifs region interacts with TNF receptor associated factors 1 and 2 (TRAF1 and TRAF2) to form a heteromeric complex, which is then recruited to the tumor necrosis factor receptor 2 (TNFR2). Interaction with TRAF2 is required for ubiquitination of IKBKE, degradation of NFKBIA and activation of NF-kappa-B. Interacts with RIP1, RIP2, RIP3, RIP4 and USP19. Post-translationally, auto-ubiquitinated and degraded by the proteasome in apoptotic cells. In terms of tissue distribution, highly expressed in fetal lung, and kidney. In the adult, expression is mainly seen in lymphoid tissues, including spleen, thymus and peripheral blood lymphocytes.

Its subcellular location is the cytoplasm. It is found in the nucleus. It carries out the reaction S-ubiquitinyl-[E2 ubiquitin-conjugating enzyme]-L-cysteine + [acceptor protein]-L-lysine = [E2 ubiquitin-conjugating enzyme]-L-cysteine + N(6)-ubiquitinyl-[acceptor protein]-L-lysine.. Its activity is regulated as follows. USP19 regulates the stability of BIRC3/c-IAP2 by preventing its ubiquitination. In terms of biological role, multi-functional protein which regulates not only caspases and apoptosis, but also modulates inflammatory signaling and immunity, mitogenic kinase signaling and cell proliferation, as well as cell invasion and metastasis. Acts as an E3 ubiquitin-protein ligase regulating NF-kappa-B signaling and regulates both canonical and non-canonical NF-kappa-B signaling by acting in opposite directions: acts as a positive regulator of the canonical pathway and suppresses constitutive activation of non-canonical NF-kappa-B signaling. The target proteins for its E3 ubiquitin-protein ligase activity include: RIPK1, RIPK2, RIPK3, RIPK4, CASP3, CASP7, CASP8, IKBKE, TRAF1, and BCL10. Acts as an important regulator of innate immune signaling via regulation of Toll-like receptors (TLRs), Nodlike receptors (NLRs) and RIG-I like receptors (RLRs), collectively referred to as pattern recognition receptors (PRRs). Protects cells from spontaneous formation of the ripoptosome, a large multi-protein complex that has the capability to kill cancer cells in a caspase-dependent and caspase-independent manner. Suppresses ripoptosome formation by ubiquitinating RIPK1 and CASP8. The sequence is that of Baculoviral IAP repeat-containing protein 3 (BIRC3) from Homo sapiens (Human).